The sequence spans 345 residues: Anthranilate phosphoribosyltransferase (345 aa).

Residues Gly87, Gly90–Asp91, Thr95, Asn97–Thr100, Lys115–Ser123, and Ser127 contribute to the 5-phospho-alpha-D-ribose 1-diphosphate site. Position 87 (Gly87) interacts with anthranilate. Ser99 contacts Mg(2+). Asn118 provides a ligand contact to anthranilate. Arg173 serves as a coordination point for anthranilate. Residues Asp232 and Glu233 each coordinate Mg(2+).

This sequence belongs to the anthranilate phosphoribosyltransferase family. In terms of assembly, homodimer. It depends on Mg(2+) as a cofactor.

The enzyme catalyses N-(5-phospho-beta-D-ribosyl)anthranilate + diphosphate = 5-phospho-alpha-D-ribose 1-diphosphate + anthranilate. It functions in the pathway amino-acid biosynthesis; L-tryptophan biosynthesis; L-tryptophan from chorismate: step 2/5. In terms of biological role, catalyzes the transfer of the phosphoribosyl group of 5-phosphorylribose-1-pyrophosphate (PRPP) to anthranilate to yield N-(5'-phosphoribosyl)-anthranilate (PRA). This chain is Anthranilate phosphoribosyltransferase, found in Aeropyrum pernix (strain ATCC 700893 / DSM 11879 / JCM 9820 / NBRC 100138 / K1).